The following is a 311-amino-acid chain: tRNA-cytidine(32) 2-sulfurtransferase (311 aa).

The PP-loop motif signature appears at S47–S52. [4Fe-4S] cluster is bound by residues C122, C125, and C213.

This sequence belongs to the TtcA family. Homodimer. Requires Mg(2+) as cofactor. The cofactor is [4Fe-4S] cluster.

Its subcellular location is the cytoplasm. The catalysed reaction is cytidine(32) in tRNA + S-sulfanyl-L-cysteinyl-[cysteine desulfurase] + AH2 + ATP = 2-thiocytidine(32) in tRNA + L-cysteinyl-[cysteine desulfurase] + A + AMP + diphosphate + H(+). It participates in tRNA modification. Its function is as follows. Catalyzes the ATP-dependent 2-thiolation of cytidine in position 32 of tRNA, to form 2-thiocytidine (s(2)C32). The sulfur atoms are provided by the cysteine/cysteine desulfurase (IscS) system. The polypeptide is tRNA-cytidine(32) 2-sulfurtransferase (Escherichia coli O139:H28 (strain E24377A / ETEC)).